A 308-amino-acid chain; its full sequence is 2-methylisocitrate lyase (308 aa).

Residue 51–53 (SGA) participates in substrate binding. Residues Asp-90 and Asp-92 each coordinate Mg(2+). Residues 127–128 (CG), Arg-160, Glu-190, 212–214 (NMT), Arg-243, and Arg-272 each bind substrate.

Belongs to the isocitrate lyase/PEP mutase superfamily. Methylisocitrate lyase family. As to quaternary structure, homotetramer; dimer of dimers. Mg(2+) serves as cofactor.

It catalyses the reaction (2S,3R)-3-hydroxybutane-1,2,3-tricarboxylate = pyruvate + succinate. The protein operates within organic acid metabolism; propanoate degradation. Functionally, involved in the catabolism of short chain fatty acids (SCFA) via the 2-methylcitrate cycle I (propionate degradation route). Catalyzes the thermodynamically favored C-C bond cleavage of (2R,3S)-2-methylisocitrate to yield pyruvate and succinate via an alpha-carboxy-carbanion intermediate. This chain is 2-methylisocitrate lyase, found in Aeropyrum pernix (strain ATCC 700893 / DSM 11879 / JCM 9820 / NBRC 100138 / K1).